A 127-amino-acid chain; its full sequence is Small ribosomal subunit protein uS12 (127 aa).

Asp89 bears the 3-methylthioaspartic acid mark.

It belongs to the universal ribosomal protein uS12 family. Part of the 30S ribosomal subunit. Contacts proteins S8 and S17. May interact with IF1 in the 30S initiation complex.

Its function is as follows. With S4 and S5 plays an important role in translational accuracy. Functionally, interacts with and stabilizes bases of the 16S rRNA that are involved in tRNA selection in the A site and with the mRNA backbone. Located at the interface of the 30S and 50S subunits, it traverses the body of the 30S subunit contacting proteins on the other side and probably holding the rRNA structure together. The combined cluster of proteins S8, S12 and S17 appears to hold together the shoulder and platform of the 30S subunit. This Campylobacter lari (strain RM2100 / D67 / ATCC BAA-1060) protein is Small ribosomal subunit protein uS12.